Here is a 166-residue protein sequence, read N- to C-terminus: Ribosome maturation factor RimM (166 aa).

The PRC barrel domain maps to 94-166 (EGEYYLGKLI…IELKVLDLLK (73 aa)).

The protein belongs to the RimM family. Binds ribosomal protein uS19.

The protein localises to the cytoplasm. Its function is as follows. An accessory protein needed during the final step in the assembly of 30S ribosomal subunit, possibly for assembly of the head region. Essential for efficient processing of 16S rRNA. May be needed both before and after RbfA during the maturation of 16S rRNA. It has affinity for free ribosomal 30S subunits but not for 70S ribosomes. The chain is Ribosome maturation factor RimM from Borreliella burgdorferi (strain ATCC 35210 / DSM 4680 / CIP 102532 / B31) (Borrelia burgdorferi).